We begin with the raw amino-acid sequence, 148 residues long: NADPH-dependent 7-cyano-7-deazaguanine reductase (148 aa).

Cysteine 50 (thioimide intermediate) is an active-site residue. The active-site Proton donor is the aspartate 57. Substrate-binding positions include valine 72–serine 74 and histidine 91–glutamate 92.

This sequence belongs to the GTP cyclohydrolase I family. QueF type 1 subfamily.

The protein localises to the cytoplasm. The enzyme catalyses 7-aminomethyl-7-carbaguanine + 2 NADP(+) = 7-cyano-7-deazaguanine + 2 NADPH + 3 H(+). It participates in tRNA modification; tRNA-queuosine biosynthesis. Catalyzes the NADPH-dependent reduction of 7-cyano-7-deazaguanine (preQ0) to 7-aminomethyl-7-deazaguanine (preQ1). The sequence is that of NADPH-dependent 7-cyano-7-deazaguanine reductase from Helicobacter pylori (strain P12).